The chain runs to 115 residues: Thioredoxin-1 (115 aa).

One can recognise a Thioredoxin domain in the interval 2–114; it reads LKRCNFKNQV…RQKVLEHVSA (113 aa). Active-site nucleophile residues include cysteine 39 and cysteine 42. Cysteine 39 and cysteine 42 are oxidised to a cystine.

The protein belongs to the thioredoxin family. As to expression, expressed in ASJ and ASI ciliated sensory neurons. Expressed in the intestine (at protein level).

Functionally, participates in various redox reactions through the reversible oxidation of its active center dithiol to a disulfide and catalyzes dithiol-disulfide exchange reactions. Shown to facilitate the reduction of insulin disulfide bonds. Might play a role in the reversible nitrosylation of cysteine residues in target proteins, and thereby contributing to the response to intracellular nitric oxide. Shapes the ASJ sensory neuron biphasic response to nitric oxide (NO) exposure; trans-nitrosylation activity might inhibit calcium flux to the cytoplasm in ASJ neurons when exposed to a NO stimulus, whereas de-nitrosylation activity might promote calcium flux when NO is diminished. By regulating the NO-induced ASJ sensory neuron activity, mediates the avoidance response to NO-producing organisms like P.aeruginosa. Positively regulates life span extension under normal and caloric restriction conditions, dauer formation and the oxidative stress response. Contributes to the down-regulation of expression of the insulin-like neuropeptide daf-28 in the ASJ neurons in a redox-independent fashion, thereby promoting dauer formation. Negatively regulates the nuclear localization of the intestinal skn-1 transcription factor in a p38 MAPK pathway-dependent and redox-independent fashion. The protein is Thioredoxin-1 (trx-1) of Caenorhabditis elegans.